The following is a 395-amino-acid chain: S-adenosylmethionine synthase (395 aa).

Position 18 (His-18) interacts with ATP. A Mg(2+)-binding site is contributed by Asp-20. K(+) is bound at residue Glu-46. Residues Glu-59 and Gln-103 each contribute to the L-methionine site. Positions 103 to 113 (QSVDIAVGVDA) are flexible loop. ATP contacts are provided by residues 170 to 172 (DAK), 235 to 236 (KF), Asp-244, 250 to 251 (RK), Ala-267, and Lys-271. Asp-244 serves as a coordination point for L-methionine. Residue Lys-275 coordinates L-methionine.

This sequence belongs to the AdoMet synthase family. In terms of assembly, homotetramer; dimer of dimers. The cofactor is Mg(2+). K(+) is required as a cofactor.

It is found in the cytoplasm. It catalyses the reaction L-methionine + ATP + H2O = S-adenosyl-L-methionine + phosphate + diphosphate. Its pathway is amino-acid biosynthesis; S-adenosyl-L-methionine biosynthesis; S-adenosyl-L-methionine from L-methionine: step 1/1. Its function is as follows. Catalyzes the formation of S-adenosylmethionine (AdoMet) from methionine and ATP. The overall synthetic reaction is composed of two sequential steps, AdoMet formation and the subsequent tripolyphosphate hydrolysis which occurs prior to release of AdoMet from the enzyme. This is S-adenosylmethionine synthase from Acidiphilium cryptum (strain JF-5).